Consider the following 314-residue polypeptide: GTPase Era (314 aa).

Positions 7 to 188 (RCGFAAVIGS…REFIAGLMPE (182 aa)) constitute an Era-type G domain. The tract at residues 15-22 (GSPNAGKS) is G1. A GTP-binding site is contributed by 15–22 (GSPNAGKS). The segment at 41 to 45 (QTTRF) is G2. The G3 stretch occupies residues 62-65 (DTPG). GTP-binding positions include 62–66 (DTPGV) and 138–141 (NKVD). Positions 138–141 (NKVD) are G4. A G5 region spans residues 167 to 169 (ISA). A KH type-2 domain is found at 219 to 296 (LHEELPYASM…HLFLNVKVDA (78 aa)).

Belongs to the TRAFAC class TrmE-Era-EngA-EngB-Septin-like GTPase superfamily. Era GTPase family. Monomer.

It localises to the cytoplasm. Its subcellular location is the cell inner membrane. In terms of biological role, an essential GTPase that binds both GDP and GTP, with rapid nucleotide exchange. Plays a role in 16S rRNA processing and 30S ribosomal subunit biogenesis and possibly also in cell cycle regulation and energy metabolism. This Maricaulis maris (strain MCS10) (Caulobacter maris) protein is GTPase Era.